We begin with the raw amino-acid sequence, 452 residues long: Ethanolamine kinase 1 (452 aa).

The tract at residues 26–64 is disordered; sequence AVQTRIGNSAASRRSPAARPPVPAPPALPRGRPGTEGST. A compositionally biased stretch (pro residues) spans 43-53; sequence ARPPVPAPPAL.

It belongs to the choline/ethanolamine kinase family. Expressed in kidney, liver, placenta, heart, leukocyte, ovary and testis.

Its subcellular location is the cytoplasm. It catalyses the reaction ethanolamine + ATP = phosphoethanolamine + ADP + H(+). The protein operates within phospholipid metabolism; phosphatidylethanolamine biosynthesis; phosphatidylethanolamine from ethanolamine: step 1/3. Its function is as follows. Highly specific for ethanolamine phosphorylation. May be a rate-controlling step in phosphatidylethanolamine biosynthesis. The protein is Ethanolamine kinase 1 of Homo sapiens (Human).